Reading from the N-terminus, the 196-residue chain is Peptide deformylase (196 aa).

2 residues coordinate Fe cation: cysteine 103 and histidine 145. Residue glutamate 146 is part of the active site. Residue histidine 149 coordinates Fe cation.

The protein belongs to the polypeptide deformylase family. The cofactor is Fe(2+).

It carries out the reaction N-terminal N-formyl-L-methionyl-[peptide] + H2O = N-terminal L-methionyl-[peptide] + formate. Its function is as follows. Removes the formyl group from the N-terminal Met of newly synthesized proteins. Requires at least a dipeptide for an efficient rate of reaction. N-terminal L-methionine is a prerequisite for activity but the enzyme has broad specificity at other positions. The polypeptide is Peptide deformylase (Rhodococcus opacus (strain B4)).